We begin with the raw amino-acid sequence, 363 residues long: Autophagy-related protein 3 (363 aa).

Composition is skewed to basic and acidic residues over residues 84 to 106 and 129 to 138; these read DFAG…RGDG and ARVRDVRTVD. The flexible region stretch occupies residues 84 to 171; sequence DFAGDAGHDE…DDEAIIRDPK (88 aa). The interval 84–174 is disordered; sequence DFAGDAGHDE…AIIRDPKADN (91 aa). Residues 139–164 show a composition bias toward acidic residues; the sequence is ESGEMGEREDDEDDIPDMEDDDDDDE. Cys247 (glycyl thioester intermediate) is an active-site residue. The segment at 251-339 is handle region; sequence SVMKTLLDRA…EEEVAIRVDQ (89 aa).

It belongs to the ATG3 family. In terms of assembly, monomer. Interacts with atg8 through an intermediate thioester bond through the C-terminal Gly of atg8. Interacts with the C-terminal region of the E1-like atg7 enzyme. Also interacts with the atg12-atg5 conjugate.

It is found in the cytoplasm. Functionally, E2 conjugating enzyme required for the cytoplasm to vacuole transport (Cvt) and autophagy. Required for selective autophagic degradation of the nucleus (nucleophagy) as well as for mitophagy which contributes to regulate mitochondrial quantity and quality by eliminating the mitochondria to a basal level to fulfill cellular energy requirements and preventing excess ROS production. Responsible for the E2-like covalent binding of phosphatidylethanolamine to the C-terminal Gly of atg8. The atg12-atg5 conjugate plays a role of an E3 and promotes the transfer of atg8 from atg3 to phosphatidylethanolamine (PE). This step is required for the membrane association of atg8. The formation of the atg8-phosphatidylethanolamine conjugate is essential for autophagy and for the cytoplasm to vacuole transport (Cvt). The atg8-PE conjugate mediates tethering between adjacent membranes and stimulates membrane hemifusion, leading to expansion of the autophagosomal membrane during autophagy. Required for normal mycelial growth and conidiogenesis, and regulates sclerotial formation. Plays an essential role in pathogenesis. The protein is Autophagy-related protein 3 of Botryotinia fuckeliana (strain BcDW1) (Noble rot fungus).